Reading from the N-terminus, the 766-residue chain is NADH-dependent flavin oxidoreductase iliE (766 aa).

A compositionally biased stretch (polar residues) spans 1–13 (MSEQLGSHITTPS). The segment at 1 to 24 (MSEQLGSHITTPSSHDDASKDKRP) is disordered. The span at 14–24 (SHDDASKDKRP) shows a compositional bias: basic and acidic residues. Residue Asn30 is glycosylated (N-linked (GlcNAc...) asparagine). 61-64 (AATA) contacts FMN. Asn70 and Asn136 each carry an N-linked (GlcNAc...) asparagine glycan. Gln143 serves as a coordination point for FMN. Position 224–227 (224–227 (HAGH)) interacts with substrate. 385–386 (AR) lines the FMN pocket. A J domain is found at 551 to 622 (TPYDILAMRK…SKRSLYDTQG (72 aa)). Residues Asn634, Asn650, and Asn654 are each glycosylated (N-linked (GlcNAc...) asparagine). The chain crosses the membrane as a helical span at residues 675 to 695 (MYMSNGVFATLVVMMCMIGAF).

This sequence belongs to the NADH:flavin oxidoreductase/NADH oxidase family.

It localises to the membrane. In terms of biological role, NADH-dependent flavin oxidoreductase; part of the gene cluster that mediates the biosynthesis of ilicicolin H, a 4-hydroxy-2-pyridonealkaloid that has potent and broad antifungal activities by inhibiting the mitochondrial respiration chain. The biosynthesis of ilicicolin H starts with formation of the tetramic acid by the hybrid PKS-NRPS synthetase iliA with the partnering trans-enoyl reductase iliB since iliA lacks a designated enoylreductase (ER) domain. The cytochrome P450 monooxygenase iliC then catalyzes the ring expansion of the tetramate to the acyclic 2-pyridone. The pericyclase iliD further converts the acyclic 2-pyridone into 8-epi-ilicicolin H. 8-epi-ilicicolin H might then spontaneously convert to ilicicolin H since ilicicolin H is produced in the absence of the epimerase iliE, in contrast to what was observed for the Talaromyces variabilis ilicolin H biosynthetic pathway. The protein is NADH-dependent flavin oxidoreductase iliE of Neonectria sp. (strain DH2).